The primary structure comprises 145 residues: Large ribosomal subunit protein uL13 (145 aa).

Belongs to the universal ribosomal protein uL13 family. In terms of assembly, part of the 50S ribosomal subunit.

Functionally, this protein is one of the early assembly proteins of the 50S ribosomal subunit, although it is not seen to bind rRNA by itself. It is important during the early stages of 50S assembly. The chain is Large ribosomal subunit protein uL13 from Geobacillus sp. (strain WCH70).